The following is a 97-amino-acid chain: U-reduvitoxin-Pr10a (97 aa).

The first 18 residues, 1-18 (MKTALFLVFALAFIAVEG), serve as a signal peptide directing secretion. 2 Pacifastin domains span residues 22-59 (KACS…CPPR) and 62-97 (KQSC…RLCW). 3 disulfides stabilise this stretch: cysteine 24-cysteine 42, cysteine 37-cysteine 56, and cysteine 40-cysteine 51. The tract at residues 57-59 (PPR) is pro-Pro-Arg motif necessary for proteolytic processing. 3 disulfide bridges follow: cysteine 65–cysteine 82, cysteine 77–cysteine 96, and cysteine 80–cysteine 91.

It belongs to the protease inhibitor I19 family. Expressed by the venom gland.

It is found in the secreted. In terms of biological role, inhibits trypsin activity and prophenoloxidase (PPO) activation, an enzyme essential for both clotting and insect innate immune responses. It does not inhibit activity of chymotrypsin and protease K, and has no effect on phenoloxidase (PO) activity. The polypeptide is U-reduvitoxin-Pr10a (Platymeris rhadamanthus (Red spot assassin bug)).